The chain runs to 367 residues: Heme A synthase (367 aa).

The next 5 helical transmembrane spans lie at 25–45 (ALRFWLGFVLLALFCLVLVGG), 111–131 (LIARGIGVIFALPLLYFWLTG), 139–159 (WPLVGILALGGLQGFIGWWMV), 174–194 (LATHLVMACLIFAGCMWIMRG), and 210–230 (GFAATIAIFALFQIYLGALVA). His274 is a heme binding site. A run of 3 helical transmembrane segments spans residues 276 to 296 (IGAYTLFALTLINMVIALRAA), 305 to 325 (AVVLFSLVTLQAAIGIATLLM), and 327 to 347 (VPLHWGLLHQAGALVVFGFAI). His335 is a binding site for heme.

This sequence belongs to the COX15/CtaA family. Type 2 subfamily. As to quaternary structure, interacts with CtaB. Heme b is required as a cofactor.

It is found in the cell membrane. It catalyses the reaction Fe(II)-heme o + 2 A + H2O = Fe(II)-heme a + 2 AH2. Its pathway is porphyrin-containing compound metabolism; heme A biosynthesis; heme A from heme O: step 1/1. In terms of biological role, catalyzes the conversion of heme O to heme A by two successive hydroxylations of the methyl group at C8. The first hydroxylation forms heme I, the second hydroxylation results in an unstable dihydroxymethyl group, which spontaneously dehydrates, resulting in the formyl group of heme A. In Rhizobium leguminosarum bv. trifolii (strain WSM2304), this protein is Heme A synthase.